We begin with the raw amino-acid sequence, 339 residues long: Protein RecA (339 aa).

73–80 serves as a coordination point for ATP; sequence GPESSGKT.

This sequence belongs to the RecA family.

Its subcellular location is the cytoplasm. In terms of biological role, can catalyze the hydrolysis of ATP in the presence of single-stranded DNA, the ATP-dependent uptake of single-stranded DNA by duplex DNA, and the ATP-dependent hybridization of homologous single-stranded DNAs. It interacts with LexA causing its activation and leading to its autocatalytic cleavage. The chain is Protein RecA from Mycoplasmopsis pulmonis (strain UAB CTIP) (Mycoplasma pulmonis).